Reading from the N-terminus, the 130-residue chain is Small ribosomal subunit protein uS8 (130 aa).

It belongs to the universal ribosomal protein uS8 family. As to quaternary structure, part of the 30S ribosomal subunit. Contacts proteins S5 and S12.

One of the primary rRNA binding proteins, it binds directly to 16S rRNA central domain where it helps coordinate assembly of the platform of the 30S subunit. This is Small ribosomal subunit protein uS8 from Pseudomonas aeruginosa (strain UCBPP-PA14).